Consider the following 261-residue polypeptide: uncharacterized protein (261 aa).

The protein belongs to the FrhB family.

This is an uncharacterized protein from Methanocaldococcus jannaschii (strain ATCC 43067 / DSM 2661 / JAL-1 / JCM 10045 / NBRC 100440) (Methanococcus jannaschii).